The primary structure comprises 202 residues: Holliday junction branch migration complex subunit RuvA (202 aa).

The domain I stretch occupies residues 1–64; sequence MIGRLSGTLL…EDAHLLFGFA (64 aa). The segment at 65–143 is domain II; that stretch reads GRAERELFRQ…SLPSADLLSP (79 aa). Positions 144-152 are flexible linker; that stretch reads APAAGAALL. The domain III stretch occupies residues 153–202; that stretch reads VENDERADISQALQALGYSAREAEAALKSVPDGTDVATGIRLALKALARP.

Belongs to the RuvA family. As to quaternary structure, homotetramer. Forms an RuvA(8)-RuvB(12)-Holliday junction (HJ) complex. HJ DNA is sandwiched between 2 RuvA tetramers; dsDNA enters through RuvA and exits via RuvB. An RuvB hexamer assembles on each DNA strand where it exits the tetramer. Each RuvB hexamer is contacted by two RuvA subunits (via domain III) on 2 adjacent RuvB subunits; this complex drives branch migration. In the full resolvosome a probable DNA-RuvA(4)-RuvB(12)-RuvC(2) complex forms which resolves the HJ.

The protein resides in the cytoplasm. The RuvA-RuvB-RuvC complex processes Holliday junction (HJ) DNA during genetic recombination and DNA repair, while the RuvA-RuvB complex plays an important role in the rescue of blocked DNA replication forks via replication fork reversal (RFR). RuvA specifically binds to HJ cruciform DNA, conferring on it an open structure. The RuvB hexamer acts as an ATP-dependent pump, pulling dsDNA into and through the RuvAB complex. HJ branch migration allows RuvC to scan DNA until it finds its consensus sequence, where it cleaves and resolves the cruciform DNA. This Laribacter hongkongensis (strain HLHK9) protein is Holliday junction branch migration complex subunit RuvA.